A 168-amino-acid polypeptide reads, in one-letter code: Translationally-controlled tumor protein homolog (168 aa).

Residues 1-168 enclose the TCTP domain; sequence MLLYKDVISG…FKDGLVSEKF (168 aa). Ser-78 carries the post-translational modification Phosphoserine.

It belongs to the TCTP family.

Its subcellular location is the cytoplasm. Functionally, involved in calcium binding and microtubule stabilization. May be a guanine nucleotide-free chaperone (GFC). This is Translationally-controlled tumor protein homolog (p23fy) from Schizosaccharomyces pombe (strain 972 / ATCC 24843) (Fission yeast).